A 207-amino-acid chain; its full sequence is Ras-related protein Rab-8A (207 aa).

GTP-binding residues include Ser-17, Gly-18, Val-19, Gly-20, Lys-21, Thr-22, Cys-23, Ser-35, Ser-39, and Thr-40. Thr-22 contributes to the Mg(2+) binding site. 2 consecutive short sequence motifs (switch) follow at residues 31–45 and 63–80; these read DAFN…GIDF and DTAG…YYRG. Mg(2+) contacts are provided by Thr-40 and Asp-63. Gly-66 provides a ligand contact to GTP. Thr-72 bears the Phosphothreonine; by LRRK2 mark. Residues Asn-121, Lys-122, Asp-124, Ala-152, and Lys-153 each coordinate GTP. Phosphoserine is present on residues Ser-181 and Ser-185. Cysteine methyl ester is present on Cys-204. Cys-204 carries S-geranylgeranyl cysteine lipidation. Residues 205-207 constitute a propeptide, removed in mature form; sequence SLL.

It belongs to the small GTPase superfamily. Rab family. As to quaternary structure, interacts (GTP-bound form) with MICALL1; regulates RAB8A association with recycling endosomes. Interacts with MICALL2; competes with RAB13 and is involved in E-cadherin endocytic recycling. Interacts (GTP-bound form) with MICAL1, MICALCL, MICAL3 and EHBP1L1; two molecules of RAB8A can bind to one molecule of the effector protein; ternary complexes of RAB8A, RAB13 and either MICAL1 or EHBP1L1 are possible. Interacts (GTP-bound form) with EHBP1. Interacts with EHD1. Interacts with MAP4K2 and SYTL4. Interacts with SGSM1 and SGSM3. Interacts with RABIF, RIMS2, RPH3A and RPH3A. Interacts with OPTN. Interacts with MYO5B. Interacts with CIMAP3. Interacts with BIRC6/bruce. Interacts with OCRL. Interacts with AHI1. Interacts with DCDC1. Interacts with LRRK2; interaction facilitates phosphorylation of Thr-72. Interacts with RAB31P, GDI1, GDI2, CHM, CHML, RABGGTA, RABGGTB, TBC1D15 and INPP5B; these interactions are dependent on Thr-72 not being phosphorylated. Interacts with RILPL1 and RILPL2; these interactions are dependent on the phosphorylation of Thr-72 by LRRK2. Interacts with DZIP1; prevents inhibition by the GDP-dissociation inhibitor GDI2. Interacts with RAB3IP/Rabin8, RAB3IP functions as guanine exchange factor (GEF) towards RAB8A. Interacts (in GDP-bound form) with RPGR, RPGR functions as GEF towards RAB8A. It depends on Mg(2+) as a cofactor. Phosphorylation of Thr-72 in the switch II region by LRRK2 prevents the association of RAB regulatory proteins, including CHM, CHML and RAB GDP dissociation inhibitors GDI1 and GDI2. Phosphorylation by LRRK2 is required for localization to stressed lysosomes.

It localises to the cell membrane. The protein localises to the golgi apparatus. The protein resides in the endosome membrane. Its subcellular location is the recycling endosome membrane. It is found in the cell projection. It localises to the cilium. The protein localises to the cytoplasmic vesicle. The protein resides in the phagosome membrane. Its subcellular location is the cytoplasm. It is found in the cytoskeleton. It localises to the microtubule organizing center. The protein localises to the centrosome. The protein resides in the centriole. Its subcellular location is the cilium basal body. It is found in the midbody. It localises to the lysosome. The catalysed reaction is GTP + H2O = GDP + phosphate + H(+). With respect to regulation, regulated by guanine nucleotide exchange factors (GEFs) such as RAB3IP/Rabin8 and RPGR which promote the exchange of bound GDP for free GTP, GTPase activating proteins (GAPs) which increase the GTP hydrolysis activity, and GDP dissociation inhibitors (GDIs) which inhibit the dissociation of the nucleotide from the GTPase. Activated in response to insulin. In terms of biological role, the small GTPases Rab are key regulators of intracellular membrane trafficking, from the formation of transport vesicles to their fusion with membranes. Rabs cycle between an inactive GDP-bound form and an active GTP-bound form that is able to recruit to membranes different sets of downstream effectors directly responsible for vesicle formation, movement, tethering and fusion. RAB8A is involved in polarized vesicular trafficking and neurotransmitter release. Together with RAB11A, RAB3IP, the exocyst complex, PARD3, PRKCI, ANXA2, CDC42 and DNMBP promotes transcytosis of PODXL to the apical membrane initiation sites (AMIS), apical surface formation and lumenogenesis. Regulates the compacted morphology of the Golgi. Together with MYO5B and RAB11A participates in epithelial cell polarization. Also involved in membrane trafficking to the cilium and ciliogenesis. Together with MICALL2, may also regulate adherens junction assembly. May play a role in insulin-induced transport to the plasma membrane of the glucose transporter GLUT4 and therefore play a role in glucose homeostasis. Involved in autophagy. Participates in the export of a subset of neosynthesized proteins through a Rab8-Rab10-Rab11-dependent endososomal export route. Targeted to and stabilized on stressed lysosomes through LRRK2 phosphorylation. Suppresses stress-induced lysosomal enlargement through EHBP1 and EHNP1L1 effector proteins. In Mus musculus (Mouse), this protein is Ras-related protein Rab-8A.